We begin with the raw amino-acid sequence, 236 residues long: Small ribosomal subunit protein uS2c (236 aa).

Belongs to the universal ribosomal protein uS2 family.

The protein localises to the plastid. It is found in the chloroplast. This is Small ribosomal subunit protein uS2c (rps2) from Chloranthus spicatus (Chulantree).